Consider the following 243-residue polypeptide: MLIIAGLGNPGGKYAGNRHNIGFMAVDAIHRRHSFSPWSKKFRAEIAEGELGGEKVLLIKPQTFMNLSGEAVGEAMRFYKLQPADLVAIYDELDLPAGKARLKTGGGHGGHNGIKSLDAHCGKEYRRLRLGIGHPGIKEMVQNHVLGDFAKADKAWLEPLLDTLADNADMLVRNEDSQLMNKIALALGGKAEEEKPRKDNKTTEKKPAGQSHIHQARNHNQPKVLTTGPMADILKKMFGNKGE.

Tyr-14 provides a ligand contact to tRNA. His-19 functions as the Proton acceptor in the catalytic mechanism. Residues Phe-64, Asn-66, and Asn-112 each coordinate tRNA. A disordered region spans residues Gly-188 to Glu-243. The segment covering Lys-190–Pro-207 has biased composition (basic and acidic residues).

Belongs to the PTH family. Monomer.

It is found in the cytoplasm. It carries out the reaction an N-acyl-L-alpha-aminoacyl-tRNA + H2O = an N-acyl-L-amino acid + a tRNA + H(+). Hydrolyzes ribosome-free peptidyl-tRNAs (with 1 or more amino acids incorporated), which drop off the ribosome during protein synthesis, or as a result of ribosome stalling. Functionally, catalyzes the release of premature peptidyl moieties from peptidyl-tRNA molecules trapped in stalled 50S ribosomal subunits, and thus maintains levels of free tRNAs and 50S ribosomes. This chain is Peptidyl-tRNA hydrolase, found in Rhizobium leguminosarum bv. trifolii (strain WSM2304).